Reading from the N-terminus, the 1174-residue chain is DNA-directed RNA polymerase subunit beta' (1174 aa).

Residues Cys60, Cys62, Cys75, and Cys78 each contribute to the Zn(2+) site. Asp450, Asp452, and Asp454 together coordinate Mg(2+). 4 residues coordinate Zn(2+): Cys795, Cys869, Cys876, and Cys879.

The protein belongs to the RNA polymerase beta' chain family. As to quaternary structure, the RNAP catalytic core consists of 2 alpha, 1 beta, 1 beta' and 1 omega subunit. When a sigma factor is associated with the core the holoenzyme is formed, which can initiate transcription. Mg(2+) is required as a cofactor. Requires Zn(2+) as cofactor.

The catalysed reaction is RNA(n) + a ribonucleoside 5'-triphosphate = RNA(n+1) + diphosphate. Its function is as follows. DNA-dependent RNA polymerase catalyzes the transcription of DNA into RNA using the four ribonucleoside triphosphates as substrates. This chain is DNA-directed RNA polymerase subunit beta', found in Clostridium kluyveri (strain ATCC 8527 / DSM 555 / NBRC 12016 / NCIMB 10680 / K1).